The following is a 295-amino-acid chain: tRNA-cytidine(32) 2-sulfurtransferase (295 aa).

The PP-loop motif signature appears at 63 to 68 (SGGKDS). Residues cysteine 138, cysteine 141, and cysteine 229 each coordinate [4Fe-4S] cluster.

Belongs to the TtcA family. In terms of assembly, homodimer. Mg(2+) is required as a cofactor. It depends on [4Fe-4S] cluster as a cofactor.

It is found in the cytoplasm. The catalysed reaction is cytidine(32) in tRNA + S-sulfanyl-L-cysteinyl-[cysteine desulfurase] + AH2 + ATP = 2-thiocytidine(32) in tRNA + L-cysteinyl-[cysteine desulfurase] + A + AMP + diphosphate + H(+). The protein operates within tRNA modification. Functionally, catalyzes the ATP-dependent 2-thiolation of cytidine in position 32 of tRNA, to form 2-thiocytidine (s(2)C32). The sulfur atoms are provided by the cysteine/cysteine desulfurase (IscS) system. This chain is tRNA-cytidine(32) 2-sulfurtransferase, found in Mesorhizobium japonicum (strain LMG 29417 / CECT 9101 / MAFF 303099) (Mesorhizobium loti (strain MAFF 303099)).